The chain runs to 382 residues: MKALHFGAGNIGRGFIGKLLADAGIELTFADVNQTVLDALNARHSYQVHVVGENEQVDTVSGVNAVSSIGDEVVDLIAEVDVVTTAVGPVALERIAPAIAKGLAQRKAQGTERPLNIIACENMVRGTTQLKGHVFNALAEEDKAWVEAHIGFVDSAVDRIVPPSASATHDPLEVTVETFSEWIVDKTQFKGALPTIPGMELTDNLMAFVERKLFTLNTGHAITAYLGKLAGHQTIRDAILDKKIRAVVQGAMEESGAVLIKRYAFDPQKHAAYIQKILGRFENPYLKDDVERVGRQPLRKLSAGDRLIKPLLGTLEYGLPHRNLVKGIAAAMHFRSEDDPQAQELAALIADKGPQAALAQISGLDAASDVVAEAVNDYNAEK.

An NAD(+)-binding site is contributed by Ala3–Gly14.

The protein belongs to the mannitol dehydrogenase family.

The enzyme catalyses D-mannitol 1-phosphate + NAD(+) = beta-D-fructose 6-phosphate + NADH + H(+). In Klebsiella pneumoniae, this protein is Mannitol-1-phosphate 5-dehydrogenase (mtlD).